Consider the following 1191-residue polypeptide: MEAMSPQQETLGGQPGRSSSLTGVSRLAGGSCTKKKMKTLAERRRSAPSLILDKALQKRPTTRDSPSASVDTCTFLSSLVCSNRTLLIDGRAELKRGLQRQERHLFLFNDLFVVAKIKYNNNFKIKNKIKLTDMWTASCVDEVGEGNTNAMKSFVLGWPTVNFVATFSSPEQKDKWLSLLQRYINLEKEKDYPKSIPLKIFAKDIGNCAYSKTITVMNSDTANEVINMSLPMLGITGSERDYQLWVNSGKEEAPYPLIGHEYPYGIKMSHLRDSALLTPGSKDSTTPFNLQEPFLMEQLPREMQCQFILKPSRLAAAQQLSDSGHKTFKRRRSIINWAFWRGSSTHLDNLPSSPTSPMPGQLFGISLPNICENDNLPKPVLDMLFFLNQKGPLTKGIFRQSANVKSCRELKEKLNSGVEVHLDCESIFVIASVLKDFLRNIPGSIFSSDLYDHWVSVMDQGNDEEKINTVQRLLDQLPRANVVLLRYLFGVLHNIEQHSSSNQMTAFNLAVCVAPSILWPPASSSPELENEFTKKVSLLIQFLIENCLRIFGEEITSLFREVSVRCDTRENASDISCFQLNDSSYDSLENELNEDVDAPCSDLVKKLGQGSRSMDSVLTLSDYDLDQPEVEGLLTLSDFDLAHSKDEDVQMKRPLESKPVNILVYTKIPLRDHARAPSAMCTPSYLSTAAANAAKSLRRHRRCSEPSIDYLDSKLSYLREFYQKKLRKSSCDAILSQKDEDYLKQNQPLQEEGKTCFKQSLVTGTDVSKKNATTQNTKKKSLSGSEGNHVKLFPKSKPVAISVASYSPMSSQDHSKNQPFDVNTSGYSPPHTADALKGPRTHRRCSEPNIEDQNRKLTYLRGIYSKKQHKTSCEAGLLHGEEDYLKRHKSLQMEGQKLINQSLVMGIEVGKSSATNQNTEKVLPPRLNLCPRTSYSSLSSPGTSPSGSSVSSQDSAFSQISEHSVFTPTETSSPIDCTFQAQRKREDLSPDFSNASHVSGMPGPSSGQACSRPAYTKKDTMEWHSQMHSVTLHPSTWLRNGVASLKNWSLKKKAKAARPEEEKIASPKGPLEPPPHASGVPEANSLQEEQKDLPLRAAEGLSPVQSAQRCSSSPFQDSERHCSSPFSLVESRLKLCMKSHEEIEPGSQSSSGSLPWERASASSWTLEDATSPDSGPTVVCDIEDRYLTKDI.

Residues 1-23 (MEAMSPQQETLGGQPGRSSSLTG) show a composition bias toward polar residues. Positions 1-45 (MEAMSPQQETLGGQPGRSSSLTGVSRLAGGSCTKKKMKTLAERRR) are disordered. S46 is subject to Phosphoserine. The region spanning 78 to 180 (SLVCSNRTLL…EQKDKWLSLL (103 aa)) is the PH domain. The 102-residue stretch at 194–295 (KSIPLKIFAK…TPFNLQEPFL (102 aa)) folds into the Ras-associating domain. Residues 365 to 551 (ISLPNICEND…FLIENCLRIF (187 aa)) form the Rho-GAP domain. Phosphoserine is present on residues S704 and S730. Disordered regions lie at residues 768–791 (SKKN…NHVK), 926–1014 (RLNL…SRPA), 1052–1123 (KKAK…RHCS), and 1140–1191 (HEEI…TKDI). The segment covering 934 to 961 (SYSSLSSPGTSPSGSSVSSQDSAFSQIS) has biased composition (low complexity). Polar residues-rich tracts occupy residues 962–981 (EHSV…TFQA) and 1103–1116 (PVQS…SPFQ). Basic and acidic residues predominate over residues 1182–1191 (IEDRYLTKDI).

Expressed predominantly in the brain. Lower expression is found in lymph nodes.

In terms of biological role, GTPase activator for the Rho-type GTPases by converting them to an inactive GDP-bound state. This Homo sapiens (Human) protein is Rho GTPase-activating protein 20 (ARHGAP20).